We begin with the raw amino-acid sequence, 198 residues long: HTH-type transcriptional regulator BetI (198 aa).

Residues Pro-8–Leu-68 enclose the HTH tetR-type domain. Residues Thr-31 to Phe-50 constitute a DNA-binding region (H-T-H motif).

It participates in amine and polyamine biosynthesis; betaine biosynthesis via choline pathway [regulation]. In terms of biological role, repressor involved in the biosynthesis of the osmoprotectant glycine betaine. It represses transcription of the choline transporter BetT and the genes of BetAB involved in the synthesis of glycine betaine. The polypeptide is HTH-type transcriptional regulator BetI (Brucella canis (strain ATCC 23365 / NCTC 10854 / RM-666)).